Reading from the N-terminus, the 88-residue chain is Elongation factor 1-beta (88 aa).

It belongs to the EF-1-beta/EF-1-delta family.

Its function is as follows. Promotes the exchange of GDP for GTP in EF-1-alpha/GDP, thus allowing the regeneration of EF-1-alpha/GTP that could then be used to form the ternary complex EF-1-alpha/GTP/AAtRNA. The sequence is that of Elongation factor 1-beta from Halorubrum lacusprofundi (strain ATCC 49239 / DSM 5036 / JCM 8891 / ACAM 34).